The sequence spans 67 residues: MKLQNTLILIGCLFLMGAMIGDAYSRCQLQGFNCVVRSYGLPTIPCCRGLTCRSYFPGSTYGRCQRY.

An N-terminal signal peptide occupies residues 1–23; it reads MKLQNTLILIGCLFLMGAMIGDA. Disulfide bonds link cysteine 27/cysteine 47, cysteine 34/cysteine 52, and cysteine 46/cysteine 64.

As to expression, granular hemocytes, small secretory granules.

The protein localises to the secreted. In terms of biological role, exhibits stronger antimicrobial activity against the Gram-positive bacteria (S.aureus (IC(50)=4.2 ug/ml)) and fungi (C.albicans (IC(50)=3.0 ug/ml) and P.pastoris (IC(50)=0.5 ug/ml)) than Gram-negative bacteria (E.coli (IC(50)=25 ug/ml)). Binds to chitin (8.4 uM are required to obtain 50% of binding). Does not cause hemolysis on sheep erythrocytes. Has no blocking activity on the P-type calcium channel. Has also been shown to weakly inhibit Kv1.2/KCNA2 voltage-gated potassium channels and TRPV1 receptors. This is Tachystatin-A2 from Tachypleus tridentatus (Japanese horseshoe crab).